The primary structure comprises 642 residues: Arginine--tRNA ligase, chloroplastic/mitochondrial (642 aa).

Residues 1-53 constitute a chloroplast and mitochondrion transit peptide; sequence MFIFPKDENRRETLTTKLRFSADHLTFTTVTEKLRATAWRFAFSSRAKSVVAM. A54 bears the N-acetylalanine mark. A 'HIGH' region motif is present at residues 190 to 201; the sequence is PNIAKEMHVGHL.

This sequence belongs to the class-I aminoacyl-tRNA synthetase family.

Its subcellular location is the plastid. The protein localises to the chloroplast. The protein resides in the mitochondrion. The enzyme catalyses tRNA(Arg) + L-arginine + ATP = L-arginyl-tRNA(Arg) + AMP + diphosphate. Forms part of a macromolecular complex that catalyzes the attachment of specific amino acids to cognate tRNAs during protein synthesis. The protein is Arginine--tRNA ligase, chloroplastic/mitochondrial of Arabidopsis thaliana (Mouse-ear cress).